Here is a 251-residue protein sequence, read N- to C-terminus: Triosephosphate isomerase (251 aa).

9-11 (NWK) provides a ligand contact to substrate. Histidine 96 acts as the Electrophile in catalysis. Glutamate 168 serves as the catalytic Proton acceptor. Residues glycine 174, serine 214, and 235–236 (GG) contribute to the substrate site.

Belongs to the triosephosphate isomerase family. Homodimer.

The protein resides in the cytoplasm. It carries out the reaction D-glyceraldehyde 3-phosphate = dihydroxyacetone phosphate. It participates in carbohydrate biosynthesis; gluconeogenesis. Its pathway is carbohydrate degradation; glycolysis; D-glyceraldehyde 3-phosphate from glycerone phosphate: step 1/1. Functionally, involved in the gluconeogenesis. Catalyzes stereospecifically the conversion of dihydroxyacetone phosphate (DHAP) to D-glyceraldehyde-3-phosphate (G3P). The protein is Triosephosphate isomerase of Porphyromonas gingivalis (strain ATCC BAA-308 / W83).